The following is a 148-amino-acid chain: 3-dehydroquinate dehydratase (148 aa).

Tyr23 serves as the catalytic Proton acceptor. The substrate site is built by Asn75, His81, and Asp88. Residue His101 is the Proton donor of the active site. Residues Leu102 to Ser103 and Arg112 each bind substrate.

It belongs to the type-II 3-dehydroquinase family. In terms of assembly, homododecamer.

It carries out the reaction 3-dehydroquinate = 3-dehydroshikimate + H2O. It participates in metabolic intermediate biosynthesis; chorismate biosynthesis; chorismate from D-erythrose 4-phosphate and phosphoenolpyruvate: step 3/7. Catalyzes a trans-dehydration via an enolate intermediate. The chain is 3-dehydroquinate dehydratase from Halorhodospira halophila (strain DSM 244 / SL1) (Ectothiorhodospira halophila (strain DSM 244 / SL1)).